A 245-amino-acid polypeptide reads, in one-letter code: Eukaryotic translation initiation factor 6 (245 aa).

Y113 bears the Phosphotyrosine mark. The residue at position 165 (T165) is a Phosphothreonine. S166 bears the Phosphoserine mark. S174 and S175 each carry phosphoserine; by CK1. At S235 the chain carries Phosphoserine; by PKC. Phosphoserine occurs at positions 239 and 243.

The protein belongs to the eIF-6 family. As to quaternary structure, monomer. Associates with the 60S ribosomal subunit. Interacts with RACK1. Interacts with DICER1, AGO2, TARBP2, MOV10 and RPL7A; they form a large RNA-induced silencing complex (RISC). Post-translationally, phosphorylation at Ser-174 and Ser-175 by CSNK1D/CK1 promotes nuclear export. In terms of processing, ufmylated by UFL1. In terms of tissue distribution, expressed at very high levels in colon carcinoma with lower levels in normal colon and ileum and lowest levels in kidney and muscle (at protein level).

Its subcellular location is the cytoplasm. It is found in the nucleus. The protein localises to the nucleolus. Its function is as follows. Binds to the 60S ribosomal subunit and prevents its association with the 40S ribosomal subunit to form the 80S initiation complex in the cytoplasm. Behaves as a stimulatory translation initiation factor downstream insulin/growth factors. Is also involved in ribosome biogenesis. Associates with pre-60S subunits in the nucleus and is involved in its nuclear export. Cytoplasmic release of TIF6 from 60S subunits and nuclear relocalization is promoted by a RACK1 (RACK1)-dependent protein kinase C activity. In tissues responsive to insulin, controls fatty acid synthesis and glycolysis by exerting translational control of adipogenic transcription factors such as CEBPB, CEBPD and ATF4 that have G/C rich or uORF in their 5'UTR. Required for ROS-dependent megakaryocyte maturation and platelets formation, controls the expression of mitochondrial respiratory chain genes involved in reactive oxygen species (ROS) synthesis. Involved in miRNA-mediated gene silencing by the RNA-induced silencing complex (RISC). Required for both miRNA-mediated translational repression and miRNA-mediated cleavage of complementary mRNAs by RISC. Modulates cell cycle progression and global translation of pre-B cells, its activation seems to be rate-limiting in tumorigenesis and tumor growth. The chain is Eukaryotic translation initiation factor 6 from Homo sapiens (Human).